The chain runs to 330 residues: D-alanine--D-alanine ligase (330 aa).

The region spanning 120 to 326 is the ATP-grasp domain; it reads KLWLSALDIP…FKQFLEGIIR (207 aa). Residue 150–205 coordinates ATP; sequence AFRNWGAVFVKAASQGSSVGCYKVTDAAKLSEAVNAAFGYSDQVLVEKAVRPRELE. 3 residues coordinate Mg(2+): D280, E293, and N295.

It belongs to the D-alanine--D-alanine ligase family. Requires Mg(2+) as cofactor. Mn(2+) is required as a cofactor.

The protein localises to the cytoplasm. The catalysed reaction is 2 D-alanine + ATP = D-alanyl-D-alanine + ADP + phosphate + H(+). Its pathway is cell wall biogenesis; peptidoglycan biosynthesis. Its function is as follows. Cell wall formation. The polypeptide is D-alanine--D-alanine ligase (Tolumonas auensis (strain DSM 9187 / NBRC 110442 / TA 4)).